We begin with the raw amino-acid sequence, 1057 residues long: Nuclear RNAi defective-3 protein (1057 aa).

Disordered regions lie at residues 1–89 and 344–388; these read MDLL…GLSV and LTNS…ERTV. Positions 17 to 30 are enriched in low complexity; sequence STAKKPATSASSTP. Basic and acidic residues-rich tracts occupy residues 67–81 and 356–388; these read PKRE…DPKR and GGRE…ERTV. The PAZ domain occupies 387–500; it reads TVSHYQRQFQ…YPMELMSILP (114 aa). A Piwi domain is found at 677 to 1001; that stretch reads GIIAEKRPDM…LAKRGHNNYK (325 aa).

Its subcellular location is the cytoplasm. The protein localises to the nucleus. Functionally, transports small interfering RNAs (siRNAs) from the cytoplasm to the nucleus. Required for RNA interference (RNAi) in nuclei. Required for exogenous RNAi-induced H3K27 methylation. This Caenorhabditis elegans protein is Nuclear RNAi defective-3 protein (nrde-3).